A 402-amino-acid chain; its full sequence is Speedy protein E6 (402 aa).

Residues 1 to 89 (MDRTETRFRK…EEPEKELAPE (89 aa)) are disordered. The span at 16–39 (GKITTSRQPHPQNEQSPQRSTSGY) shows a compositional bias: polar residues. Residues 76–89 (DESEEEPEKELAPE) show a composition bias toward acidic residues.

Belongs to the Speedy/Ringo family.

The polypeptide is Speedy protein E6 (SPDYE6) (Homo sapiens (Human)).